The following is a 184-amino-acid chain: ATP synthase subunit b, chloroplastic (184 aa).

The chain crosses the membrane as a helical span at residues Leu27–Leu49.

The protein belongs to the ATPase B chain family. As to quaternary structure, F-type ATPases have 2 components, F(1) - the catalytic core - and F(0) - the membrane proton channel. F(1) has five subunits: alpha(3), beta(3), gamma(1), delta(1), epsilon(1). F(0) has four main subunits: a(1), b(1), b'(1) and c(10-14). The alpha and beta chains form an alternating ring which encloses part of the gamma chain. F(1) is attached to F(0) by a central stalk formed by the gamma and epsilon chains, while a peripheral stalk is formed by the delta, b and b' chains.

It is found in the plastid. The protein localises to the chloroplast thylakoid membrane. In terms of biological role, f(1)F(0) ATP synthase produces ATP from ADP in the presence of a proton or sodium gradient. F-type ATPases consist of two structural domains, F(1) containing the extramembraneous catalytic core and F(0) containing the membrane proton channel, linked together by a central stalk and a peripheral stalk. During catalysis, ATP synthesis in the catalytic domain of F(1) is coupled via a rotary mechanism of the central stalk subunits to proton translocation. Component of the F(0) channel, it forms part of the peripheral stalk, linking F(1) to F(0). This chain is ATP synthase subunit b, chloroplastic, found in Arabidopsis thaliana (Mouse-ear cress).